The following is a 170-amino-acid chain: MKIENYIRDIQGFPKEGILFKDITPLLNNVEARQECLSILVNSLKGQKIDKVVGAESRGFFFGMLLAQELKAGFIPVRKPKKLPFDIISASYELEYGTDSLEMHIDAIKKGDRVLIHDDVLATGGTAKAVCELVEKLGGEIVQCNFLMELTFLNGRKKIKEYPVFAALTY.

Belongs to the purine/pyrimidine phosphoribosyltransferase family. As to quaternary structure, homodimer.

It is found in the cytoplasm. The catalysed reaction is AMP + diphosphate = 5-phospho-alpha-D-ribose 1-diphosphate + adenine. It functions in the pathway purine metabolism; AMP biosynthesis via salvage pathway; AMP from adenine: step 1/1. Catalyzes a salvage reaction resulting in the formation of AMP, that is energically less costly than de novo synthesis. The sequence is that of Adenine phosphoribosyltransferase from Flavobacterium johnsoniae (strain ATCC 17061 / DSM 2064 / JCM 8514 / BCRC 14874 / CCUG 350202 / NBRC 14942 / NCIMB 11054 / UW101) (Cytophaga johnsonae).